The primary structure comprises 116 residues: MTRIKRGYIARRRRTKMHFFASSFRGAHSRLTRTMTQQEKRALVSAHRDRDRQKRDFRRLWITRINAVIRERGVSYSYSKFIHDLYKNQLLLNRKILAQIAISNRKCLDMISNEIV.

It belongs to the bacterial ribosomal protein bL20 family.

The protein localises to the plastid. It localises to the chloroplast. Its function is as follows. Binds directly to 23S ribosomal RNA and is necessary for the in vitro assembly process of the 50S ribosomal subunit. It is not involved in the protein synthesizing functions of that subunit. The chain is Large ribosomal subunit protein bL20c from Ipomoea purpurea (Common morning glory).